Consider the following 296-residue polypeptide: Ribosomal protein L11 methyltransferase (296 aa).

Thr-146, Gly-167, Asp-189, and Asn-231 together coordinate S-adenosyl-L-methionine.

Belongs to the methyltransferase superfamily. PrmA family.

It is found in the cytoplasm. It catalyses the reaction L-lysyl-[protein] + 3 S-adenosyl-L-methionine = N(6),N(6),N(6)-trimethyl-L-lysyl-[protein] + 3 S-adenosyl-L-homocysteine + 3 H(+). Methylates ribosomal protein L11. The sequence is that of Ribosomal protein L11 methyltransferase from Haemophilus influenzae (strain ATCC 51907 / DSM 11121 / KW20 / Rd).